We begin with the raw amino-acid sequence, 314 residues long: Acetyl-coenzyme A carboxylase carboxyl transferase subunit beta, chloroplastic (314 aa).

The CoA carboxyltransferase N-terminal domain occupies Leu47–Val314. Residues Cys51, Cys54, Cys70, and Cys73 each coordinate Zn(2+). The C4-type zinc-finger motif lies at Cys51–Cys73.

The protein belongs to the AccD/PCCB family. Acetyl-CoA carboxylase is a heterohexamer composed of biotin carboxyl carrier protein, biotin carboxylase and 2 subunits each of ACCase subunit alpha and ACCase plastid-coded subunit beta (accD). Zn(2+) serves as cofactor.

The protein resides in the plastid. Its subcellular location is the chloroplast stroma. It catalyses the reaction N(6)-carboxybiotinyl-L-lysyl-[protein] + acetyl-CoA = N(6)-biotinyl-L-lysyl-[protein] + malonyl-CoA. The protein operates within lipid metabolism; malonyl-CoA biosynthesis; malonyl-CoA from acetyl-CoA: step 1/1. Its function is as follows. Component of the acetyl coenzyme A carboxylase (ACC) complex. Biotin carboxylase (BC) catalyzes the carboxylation of biotin on its carrier protein (BCCP) and then the CO(2) group is transferred by the transcarboxylase to acetyl-CoA to form malonyl-CoA. The polypeptide is Acetyl-coenzyme A carboxylase carboxyl transferase subunit beta, chloroplastic (Angiopteris lygodiifolia (Turnip fern)).